The following is a 78-amino-acid chain: Alpha-amylase inhibitor Haim-1 (78 aa).

Disulfide bonds link C11/C27 and C45/C72.

Its function is as follows. Inhibits mammalian alpha-amylases specifically but has no action on plant and microbial alpha-amylases. This is Alpha-amylase inhibitor Haim-1 from Streptomyces griseosporeus.